A 1025-amino-acid chain; its full sequence is Adenylate-forming reductase 03009 (1025 aa).

The interval 38–422 (FEFHAKSNPQ…LGRIDNQVKI (385 aa)) is adenylation (A) domain. AMP-binding positions include 332-333 (VT) and 412-415 (HLGR). The thiolation and peptide carrier (T) domain stretch occupies residues 556–638 (SLGSTNTKIS…AILIWICVKK (83 aa)). Positions 682–900 (FIRRTAARVY…PPTKLWVKGV (219 aa)) are thioester reductase (TR) domain. NADP(+)-binding positions include 685–688 (RTAA), 769–771 (SAL), and Tyr-840.

Belongs to the adenylate-forming reductase family.

In terms of biological role, adenylate-forming reductase, a natural product biosynthesis enzyme that resembles non-ribosomal peptide synthetases, yet serves to modify one substrate, rather than to condense two or more building blocks. The A-domain preferentially accepts L-serine, L-alanine and L-valine as substrates. The natural product of the enzyme is not yet known. This is Adenylate-forming reductase 03009 from Coprinopsis cinerea (strain Okayama-7 / 130 / ATCC MYA-4618 / FGSC 9003) (Inky cap fungus).